The primary structure comprises 244 residues: 1-(5-phosphoribosyl)-5-[(5-phosphoribosylamino)methylideneamino] imidazole-4-carboxamide isomerase (244 aa).

The Proton acceptor role is filled by Asp8. Catalysis depends on Asp131, which acts as the Proton donor.

It belongs to the HisA/HisF family.

It localises to the cytoplasm. It carries out the reaction 1-(5-phospho-beta-D-ribosyl)-5-[(5-phospho-beta-D-ribosylamino)methylideneamino]imidazole-4-carboxamide = 5-[(5-phospho-1-deoxy-D-ribulos-1-ylimino)methylamino]-1-(5-phospho-beta-D-ribosyl)imidazole-4-carboxamide. It participates in amino-acid biosynthesis; L-histidine biosynthesis; L-histidine from 5-phospho-alpha-D-ribose 1-diphosphate: step 4/9. The chain is 1-(5-phosphoribosyl)-5-[(5-phosphoribosylamino)methylideneamino] imidazole-4-carboxamide isomerase from Thermomicrobium roseum (strain ATCC 27502 / DSM 5159 / P-2).